The chain runs to 324 residues: Lactonase drp35 (324 aa).

Residues Glu-47, Ser-109, Gly-111, Asp-129, Thr-132, Tyr-134, Asp-137, Asn-184, Asp-235, and Ser-236 each coordinate Ca(2+). Catalysis depends on Asp-235, which acts as the Proton donor.

This sequence belongs to the SMP-30/CGR1 family. The cofactor is Ca(2+).

It is found in the cytoplasm. In terms of biological role, exhibits lactonase activity. Acts in cells with perturbed membrane integrity and is possibly related to the membrane homeostasis. This is Lactonase drp35 (drp35) from Staphylococcus aureus (strain USA300).